Here is a 419-residue protein sequence, read N- to C-terminus: UDP-N-acetylglucosamine 1-carboxyvinyltransferase (419 aa).

Position 22–23 (22–23) interacts with phosphoenolpyruvate; it reads KN. Arg-93 provides a ligand contact to UDP-N-acetyl-alpha-D-glucosamine. Cys-117 functions as the Proton donor in the catalytic mechanism. Cys-117 carries the post-translational modification 2-(S-cysteinyl)pyruvic acid O-phosphothioketal. Positions 306 and 328 each coordinate UDP-N-acetyl-alpha-D-glucosamine.

This sequence belongs to the EPSP synthase family. MurA subfamily.

It is found in the cytoplasm. The catalysed reaction is phosphoenolpyruvate + UDP-N-acetyl-alpha-D-glucosamine = UDP-N-acetyl-3-O-(1-carboxyvinyl)-alpha-D-glucosamine + phosphate. It functions in the pathway cell wall biogenesis; peptidoglycan biosynthesis. Functionally, cell wall formation. Adds enolpyruvyl to UDP-N-acetylglucosamine. The polypeptide is UDP-N-acetylglucosamine 1-carboxyvinyltransferase (Magnetococcus marinus (strain ATCC BAA-1437 / JCM 17883 / MC-1)).